Consider the following 329-residue polypeptide: Malate dehydrogenase 2 (329 aa).

An NAD(+)-binding site is contributed by 12 to 18 (GAAGQIA). Substrate-binding residues include Arg93 and Arg99. Residues Asn106, Gln113, and 130 to 132 (VGN) contribute to the NAD(+) site. The substrate site is built by Asn132 and Arg163. Residue His188 is the Proton acceptor of the active site.

This sequence belongs to the LDH/MDH superfamily. MDH type 2 family.

The catalysed reaction is (S)-malate + NAD(+) = oxaloacetate + NADH + H(+). In terms of biological role, catalyzes the reversible oxidation of malate to oxaloacetate. The sequence is that of Malate dehydrogenase 2 from Burkholderia thailandensis (strain ATCC 700388 / DSM 13276 / CCUG 48851 / CIP 106301 / E264).